The primary structure comprises 499 residues: Cytochrome P450 710A2 (499 aa).

The chain crosses the membrane as a helical span at residues 5 to 25 (VSIFASLAPYLVSALLLFFLI). Cysteine 439 is a binding site for heme.

This sequence belongs to the cytochrome P450 family. Heme is required as a cofactor. In terms of tissue distribution, expressed in the vascular tissues of roots, shoots, stems and leaves. Expressed in root tips, carpes, siliques and seeds.

The protein resides in the membrane. It carries out the reaction 5-dehydroepisterol + NADPH + O2 + H(+) = ergosta-5,7,22,24(28)-tetraen-3beta-ol + NADP(+) + 2 H2O. Its pathway is steroid biosynthesis; sterol biosynthesis. In terms of biological role, required to form the C-22 double bond in the sterol side chain. Possesses in vitro C-22 desaturase activity toward 24-epi-campesterol and beta-sitosterol and produces brassicasterol and stigmasterol, respectively. No activity with campesterol. This chain is Cytochrome P450 710A2, found in Arabidopsis thaliana (Mouse-ear cress).